Reading from the N-terminus, the 434-residue chain is UDP-glucuronate 4-epimerase 2 (434 aa).

The next 2 membrane-spanning stretches (helical) occupy residues 32–52 (SVAKLAFWSLVFFGLLFIFFY) and 91–111 (GVSVLVTGAAGFVGTHVSAAL). 93–124 (SVLVTGAAGFVGTHVSAALKRRGDGVLGLDNF) is a binding site for NAD(+). Tyr-243 serves as the catalytic Proton acceptor.

This sequence belongs to the NAD(P)-dependent epimerase/dehydratase family. Homodimer. In roots, leaves, siliques, flowers, pollen and stems.

It is found in the golgi apparatus. The protein localises to the golgi stack membrane. The catalysed reaction is UDP-alpha-D-glucuronate = UDP-alpha-D-galacturonate. Involved in the synthesis of the negatively charged monosaccharide that forms the backbone of pectic cell wall components. This Arabidopsis thaliana (Mouse-ear cress) protein is UDP-glucuronate 4-epimerase 2 (GAE2).